The primary structure comprises 93 residues: Alpha-defensin 22 (93 aa).

The signal sequence occupies residues 1-19; that stretch reads MKKLVLLSALVLLAYQVQT. Positions 20-58 are excised as a propeptide; that stretch reads DPIQNTDEETNTEEQPGEEDQAVSVSFGGQEGSALHEKL. A disordered region spans residues 22-41; the sequence is IQNTDEETNTEEQPGEEDQA. Acidic residues predominate over residues 25–40; sequence TDEETNTEEQPGEEDQ. 3 cysteine pairs are disulfide-bonded: Cys-64/Cys-89, Cys-66/Cys-81, and Cys-71/Cys-88.

It belongs to the alpha-defensin family.

The protein resides in the secreted. In terms of biological role, may have microbicidal activities. This is Alpha-defensin 22 (Defa22) from Mus musculus (Mouse).